Here is a 147-residue protein sequence, read N- to C-terminus: Small ribosomal subunit protein uS12 (147 aa).

The protein belongs to the universal ribosomal protein uS12 family. As to quaternary structure, part of the 30S ribosomal subunit.

In terms of biological role, with S4 and S5 plays an important role in translational accuracy. Located at the interface of the 30S and 50S subunits. The polypeptide is Small ribosomal subunit protein uS12 (Ignicoccus hospitalis (strain KIN4/I / DSM 18386 / JCM 14125)).